A 1191-amino-acid chain; its full sequence is Probable inositol polyphosphate 5-phosphatase C9G1.10c (1191 aa).

5 stretches are compositionally biased toward polar residues: residues 1–10 (MASRQGFSNV), 72–101 (QVSS…NPSN), 114–135 (SDSS…SFVS), 151–161 (SFQSSVQSTKG), and 181–193 (NFSS…SPIS). The segment at 1–193 (MASRQGFSNV…SKAGSSSPIS (193 aa)) is disordered. Phosphoserine is present on serine 195. Disordered stretches follow at residues 205–281 (SQSP…PQPV), 294–334 (SQQL…DASL), and 355–425 (IPEK…SSSS). The span at 268–280 (TPPPIPSPRPPQP) shows a compositional bias: pro residues. Basic residues predominate over residues 302–311 (SPRKPPKPPL). 3 stretches are compositionally biased toward polar residues: residues 316-334 (TQRS…DASL), 367-382 (HTLS…SENL), and 400-413 (LATN…VSTE). Residues 414–425 (QSDPSVAASSSS) are compositionally biased toward low complexity.

Belongs to the inositol 1,4,5-trisphosphate 5-phosphatase family.

The protein localises to the cytoplasm. The chain is Probable inositol polyphosphate 5-phosphatase C9G1.10c from Schizosaccharomyces pombe (strain 972 / ATCC 24843) (Fission yeast).